Here is a 340-residue protein sequence, read N- to C-terminus: Extracellular matrix protein-binding protein emp (340 aa).

An N-terminal signal peptide occupies residues 1–26 (MKKKLLVLTMSTLFATQLINSNHANA).

It is found in the cell surface. Functionally, adhesin that binds to the host cell extracellular matrix proteins fibronectin, fibrinogen, collagen, and vitronectin. The chain is Extracellular matrix protein-binding protein emp (emp) from Staphylococcus aureus.